A 398-amino-acid chain; its full sequence is MASNDKGLEEIPDNQIESNYDEITDSFDAMNLRAELLRGVYAYGFERPSAIQQRAIMPVIKGSDVIAQAQSGTGKTATFSISALQKVDTNLKACQALILAPTRELAQQIQKVVVAIGDFMSVECHACIGGTNVREDIKALNDGPQVVVGTPGRVHDMIQRRVLKTDQMKMFVLDEADEMLSRGFTEQIYDIFQFLPQSTQVVLLSATMPQDVLDVTTKFMRDPVRILVKKAELTLEGIKQFYIAVEKEEWKLDTLSDLYETVTITQAVIFCNTRRKVDWLTDKLIARDFTVSAMHGEMEQNQRDVIMKEFRSGSSRVLIATDLLARGIDVQQVSLVINYDLPANRENYIHRIGRGGRFGRKGVAINFVTADDVRMMREIEQFYSTQIEEMPMNVADLI.

The Q motif signature appears at 25-53; the sequence is DSFDAMNLRAELLRGVYAYGFERPSAIQQ. The Helicase ATP-binding domain occupies 56 to 226; sequence IMPVIKGSDV…TKFMRDPVRI (171 aa). Position 69-76 (69-76) interacts with ATP; it reads AQSGTGKT. The DEAD box motif lies at 174–177; it reads DEAD. The 162-residue stretch at 237–398 folds into the Helicase C-terminal domain; sequence GIKQFYIAVE…EMPMNVADLI (162 aa).

The protein belongs to the DEAD box helicase family. eIF4A subfamily. Component of the eIF4F complex, which composition varies with external and internal environmental conditions. It is composed of at least eIF4A, eIF4E and eIF4G.

The protein resides in the cytoplasm. It carries out the reaction ATP + H2O = ADP + phosphate + H(+). In terms of biological role, ATP-dependent RNA helicase which is a subunit of the eIF4F complex involved in cap recognition and is required for mRNA binding to ribosome. In the current model of translation initiation, eIF4A unwinds RNA secondary structures in the 5'-UTR of mRNAs which is necessary to allow efficient binding of the small ribosomal subunit, and subsequent scanning for the initiator codon. The polypeptide is ATP-dependent RNA helicase eIF4A (TIF1) (Coccidioides immitis (strain RS) (Valley fever fungus)).